A 231-amino-acid polypeptide reads, in one-letter code: Thymocyte nuclear protein 1 (231 aa).

The segment at 1–54 (MPPRKTRSSAKSNKHSDADAHLNEGSDDVAQRKTGKRKRSAAVKGDVENKNDDD) is disordered. A Nuclear localization signal motif is present at residues 4–11 (RKTRSSAK). 2 stretches are compositionally biased toward basic and acidic residues: residues 14–24 (KHSDADAHLNE) and 45–54 (GDVENKNDDD).

In terms of processing, phosphorylated.

It is found in the nucleus. In terms of biological role, specifically binds 5-hydroxymethylcytosine (5hmC), suggesting that it acts as a specific reader of 5hmC. In Danio rerio (Zebrafish), this protein is Thymocyte nuclear protein 1 (thyn1).